A 199-amino-acid chain; its full sequence is Putative ATP-dependent Clp protease proteolytic subunit-like (199 aa).

It belongs to the peptidase S14 family. As to quaternary structure, component of the chloroplastic Clp protease core complex.

Its subcellular location is the plastid. It localises to the cyanelle. Has lost the two conserved residues (Ser and His) proposed to be part of the active site. Therefore it could be inactive. In Cyanophora paradoxa, this protein is Putative ATP-dependent Clp protease proteolytic subunit-like (clpP-B).